Here is a 144-residue protein sequence, read N- to C-terminus: Protein MIX23 (144 aa).

A2 is subject to N-acetylalanine. Residues 82–120 adopt a coiled-coil conformation; it reads VKNLREEREKNLDDLTLLKQLRKEQTKLKWMQSELNVEE. The residue at position 100 (K100) is an N6-acetyllysine.

The protein belongs to the MIX23 family.

This chain is Protein MIX23, found in Homo sapiens (Human).